The sequence spans 167 residues: UPF0102 protein RB9115 (167 aa).

It belongs to the UPF0102 family.

The sequence is that of UPF0102 protein RB9115 from Rhodopirellula baltica (strain DSM 10527 / NCIMB 13988 / SH1).